The following is a 221-amino-acid chain: Histone H1.3 (221 aa).

The span at methionine 1–lysine 17 shows a compositional bias: low complexity. The disordered stretch occupies residues methionine 1 to serine 42. Serine 2 bears the N-acetylserine mark. Phosphoserine is present on serine 2. Lysine 17 carries the N6-acetyllysine modification. The residue at position 18 (threonine 18) is a Phosphothreonine. Basic residues predominate over residues valine 20–alanine 36. Residues lysine 35 and lysine 53 each carry the N6-(beta-hydroxybutyryl)lysine modification. The H15 domain maps to serine 37–lysine 110. The residue at position 55 (arginine 55) is a Citrulline. An N6-(beta-hydroxybutyryl)lysine mark is found at lysine 65, lysine 86, and lysine 91. Residues serine 87 to lysine 221 form a disordered region. Serine 105 is subject to Phosphoserine; by PKC. The residue at position 107 (lysine 107) is an N6-(beta-hydroxybutyryl)lysine. 4 stretches are compositionally biased toward basic residues: residues lysine 120–lysine 141, lysine 150–lysine 161, lysine 170–threonine 187, and lysine 194–lysine 221.

It belongs to the histone H1/H5 family. H1 histones are progressively phosphorylated during the cell cycle, becoming maximally phosphorylated during late G2 phase and M phase, and being dephosphorylated sharply thereafter. In terms of processing, citrullination at Arg-55 (H1R54ci) by PADI4 takes place within the DNA-binding site of H1 and results in its displacement from chromatin and global chromatin decondensation, thereby promoting pluripotency and stem cell maintenance.

The protein resides in the nucleus. Its subcellular location is the chromosome. Its function is as follows. H1 histones bind to linker DNA between nucleosomes forming the macromolecular structure known as the chromatin fiber. H1 histones are necessary for the condensation of nucleosome chains into higher-order structured fibers. Also acts as a regulator of individual gene transcription through chromatin remodeling, nucleosome spacing and DNA methylation. This chain is Histone H1.3, found in Bos taurus (Bovine).